A 239-amino-acid polypeptide reads, in one-letter code: RNA polymerase sigma factor FliA (239 aa).

Residues 16 to 88 (LWQRYVPLVR…MLDELRSRDW (73 aa)) are sigma-70 factor domain-2. The Interaction with polymerase core subunit RpoC signature appears at 43-46 (DLLQ). Residues 96–166 (NAREVAQAIG…IELVTDDHQR (71 aa)) are sigma-70 factor domain-3. A sigma-70 factor domain-4 region spans residues 185 to 233 (AIETLPEREKLVLTLYYQEELNLKEIGAVLEVGESRVSQLHSQAIKRLR). Residues 207–226 (LKEIGAVLEVGESRVSQLHS) constitute a DNA-binding region (H-T-H motif).

It belongs to the sigma-70 factor family. FliA subfamily.

Its subcellular location is the cytoplasm. Functionally, sigma factors are initiation factors that promote the attachment of RNA polymerase to specific initiation sites and are then released. This sigma factor controls the expression of flagella-related genes. This is RNA polymerase sigma factor FliA from Escherichia coli O157:H7.